Consider the following 597-residue polypeptide: uncharacterized protein (597 aa).

2 helical membrane-spanning segments follow: residues 4 to 23 and 209 to 231; these read LLLALLLCLAVGTAGGFKIV and FVSVSAPGFVGVTAAMSSAGIAI.

Its subcellular location is the cell membrane. This is an uncharacterized protein from Archaeoglobus fulgidus (strain ATCC 49558 / DSM 4304 / JCM 9628 / NBRC 100126 / VC-16).